We begin with the raw amino-acid sequence, 328 residues long: Probable cytosolic iron-sulfur protein assembly protein 1 (328 aa).

WD repeat units lie at residues L12 to E49, A54 to E93, G102 to E141, E148 to A187, G192 to F233, V246 to V284, and A291 to E328.

Belongs to the WD repeat CIA1 family. As to quaternary structure, interacts with NAR1.

Its subcellular location is the cytoplasm. It is found in the nucleus. Functionally, essential component of the cytosolic iron-sulfur (Fe/S) protein assembly machinery. Required for the maturation of extramitochondrial Fe/S proteins. The polypeptide is Probable cytosolic iron-sulfur protein assembly protein 1 (Eremothecium gossypii (strain ATCC 10895 / CBS 109.51 / FGSC 9923 / NRRL Y-1056) (Yeast)).